Here is a 344-residue protein sequence, read N- to C-terminus: Estradiol 17-beta-dehydrogenase 1 (344 aa).

3-32 provides a ligand contact to NAD(+); it reads STVVLITGCSSGIGLHLAVRLASDRSQSFK. S143 serves as a coordination point for substrate. The Proton acceptor role is filled by Y156.

The protein belongs to the short-chain dehydrogenases/reductases (SDR) family. Homodimer.

It localises to the cytoplasm. The catalysed reaction is 17beta-estradiol + NAD(+) = estrone + NADH + H(+). It carries out the reaction 17beta-estradiol + NADP(+) = estrone + NADPH + H(+). Its pathway is steroid biosynthesis; estrogen biosynthesis. In terms of biological role, favors the reduction of estrogens and androgens. Uses preferentially NADH. In Rattus norvegicus (Rat), this protein is Estradiol 17-beta-dehydrogenase 1 (Hsd17b1).